Here is a 715-residue protein sequence, read N- to C-terminus: Macrolide export ATP-binding/permease protein MacB (715 aa).

An ABC transporter domain is found at 4-245; sequence IELQDIRKTY…VSKAAPAQSK (242 aa). Position 40-47 (40-47) interacts with ATP; it reads GTSGSGKT. The disordered stretch occupies residues 229–251; sequence AVGDMPQVSKAAPAQSKPVHSAM. A run of 4 helical transmembrane segments spans residues 277–297, 592–612, 639–659, and 681–701; these read AALTTLGIIIGVAAVIAMMEI, LLLAVALISLIVGGVGIMNIM, QFLFEAVLLCFLGGAVGILVG, and ILAAVGVSATVGIVFGYYPAW.

This sequence belongs to the ABC transporter superfamily. Macrolide exporter (TC 3.A.1.122) family. Homodimer.

It localises to the cell inner membrane. Functionally, non-canonical ABC transporter that contains transmembrane domains (TMD), which form a pore in the inner membrane, and an ATP-binding domain (NBD), which is responsible for energy generation. Confers resistance against macrolides. This is Macrolide export ATP-binding/permease protein MacB from Syntrophobacter fumaroxidans (strain DSM 10017 / MPOB).